The sequence spans 597 residues: Elongation factor 4 (597 aa).

Residues 2–184 (KNIRNFSIIA…TMIAKIPPPV (183 aa)) enclose the tr-type G domain. Residues 14–19 (DHGKST) and 131–134 (NKID) each bind GTP.

It belongs to the TRAFAC class translation factor GTPase superfamily. Classic translation factor GTPase family. LepA subfamily.

It is found in the cell inner membrane. The catalysed reaction is GTP + H2O = GDP + phosphate + H(+). Required for accurate and efficient protein synthesis under certain stress conditions. May act as a fidelity factor of the translation reaction, by catalyzing a one-codon backward translocation of tRNAs on improperly translocated ribosomes. Back-translocation proceeds from a post-translocation (POST) complex to a pre-translocation (PRE) complex, thus giving elongation factor G a second chance to translocate the tRNAs correctly. Binds to ribosomes in a GTP-dependent manner. In Methylobacillus flagellatus (strain ATCC 51484 / DSM 6875 / VKM B-1610 / KT), this protein is Elongation factor 4.